The sequence spans 148 residues: Cell division protein SepF (148 aa).

A disordered region spans residues 1–59 (MNNKFKDFFGFGDNDSYEERDAYEEHYDEQEEMQNSNRPTNSRDSNVVSIKAGQAGSGP). Residues 33–48 (MQNSNRPTNSRDSNVV) show a composition bias toward polar residues.

The protein belongs to the SepF family. As to quaternary structure, homodimer. Interacts with FtsZ.

The protein localises to the cytoplasm. Cell division protein that is part of the divisome complex and is recruited early to the Z-ring. Probably stimulates Z-ring formation, perhaps through the cross-linking of FtsZ protofilaments. Its function overlaps with FtsA. The protein is Cell division protein SepF of Lactobacillus delbrueckii subsp. bulgaricus (strain ATCC BAA-365 / Lb-18).